Here is a 29-residue protein sequence, read N- to C-terminus: Snake venom metalloproteinase bothrolysin (29 aa).

The region spanning 6–29 (RYIELFLVVDSGMFMKYNGNSDKI) is the Peptidase M12B domain. Glutamate 9 provides a ligand contact to Ca(2+).

Belongs to the venom metalloproteinase (M12B) family. Requires Zn(2+) as cofactor. In terms of tissue distribution, expressed by the venom gland.

Its subcellular location is the secreted. The catalysed reaction is Cleavage of 4-Gln-|-His-5, 9-Ser-|-His-10 and 14-Ala-|-Leu-15 of insulin B chain and Pro-|-Phe of angiotensin I.. In terms of biological role, snake venom zinc metalloproteinase that impairs hemostasis in the envenomed animal. This Bothrops jararaca (Jararaca) protein is Snake venom metalloproteinase bothrolysin.